The following is a 591-amino-acid chain: Probable translation initiation factor IF-2 (591 aa).

Positions 7–223 (LRTPIVCVMG…LLGLAQKFLE (217 aa)) constitute a tr-type G domain. The tract at residues 16-23 (GHVDHGKT) is G1. 16 to 23 (GHVDHGKT) contacts GTP. The interval 41 to 45 (AITQH) is G2. Residues 78–81 (DTPG) form a G3 region. GTP is bound by residues 78-82 (DTPGH) and 132-135 (NKID). Residues 132–135 (NKID) form a G4 region. A G5 region spans residues 200 to 202 (SAF).

The protein belongs to the TRAFAC class translation factor GTPase superfamily. Classic translation factor GTPase family. IF-2 subfamily.

Functionally, function in general translation initiation by promoting the binding of the formylmethionine-tRNA to ribosomes. Seems to function along with eIF-2. This Methanosarcina mazei (strain ATCC BAA-159 / DSM 3647 / Goe1 / Go1 / JCM 11833 / OCM 88) (Methanosarcina frisia) protein is Probable translation initiation factor IF-2.